We begin with the raw amino-acid sequence, 639 residues long: Muscarinic acetylcholine receptor M3 (639 aa).

Over 1-115 (MLTHYQLCFQ…DPLGGHAVWQ (115 aa)) the chain is Extracellular. Residues Asn-16, Asn-44, Asn-45, Asn-54, Asn-97, and Asn-101 are each glycosylated (N-linked (GlcNAc...) asparagine). A helical membrane pass occupies residues 116-139 (VVLIAFLTGIIALVTIIGNILVIV). Topologically, residues 140–152 (SFKVNKQLKTVNN) are cytoplasmic. Residues 153–173 (YFLLSLACADLIIGVISMNLF) traverse the membrane as a helical segment. The Extracellular portion of the chain corresponds to 174-190 (TTYIIMGHWALGNLACD). A disulfide bond links Cys-189 and Cys-269. A helical transmembrane segment spans residues 191 to 212 (LWLSIDYVASNASVMNLLVISF). Over 213-232 (DRYFSITRPLTYRAKRTTKR) the chain is Cytoplasmic. Residues 233–255 (AGVMIGLAWIISFVLWAPAILFW) form a helical membrane-spanning segment. Over 256–277 (QYFVGKRTVPLDECFIQFLSEP) the chain is Extracellular. The helical transmembrane segment at 278-300 (IITFGTAIAAFYLPVTIMSILYW) threads the bilayer. Residues 301-542 (RIYKETEKRT…LIKEKKAAQT (242 aa)) are Cytoplasmic-facing. Disordered regions lie at residues 370-404 (PNTDQGDQEHSSSDSWNNNDAAASLENSASSDEED) and 431-471 (LPSS…GGSF). Positions 382 to 393 (SDSWNNNDAAAS) are enriched in low complexity. Residues 443 to 454 (ELQKSDTDSQEK) are compositionally biased toward basic and acidic residues. Residues 543–563 (LSAILFAFIITWTPYNIMVLV) traverse the membrane as a helical segment. Over 564 to 576 (NTFCDCVPKTVWN) the chain is Extracellular. Residues 577-596 (LGYWLCYINSTVNPVCYALC) form a helical membrane-spanning segment. Residues 597–639 (NKMFRNTFKMLLLCQCDKRKRRKQQYQQRQSVIFHKRIPREAS) are Cytoplasmic-facing.

Belongs to the G-protein coupled receptor 1 family. Muscarinic acetylcholine receptor subfamily. CHRM3 sub-subfamily. In terms of tissue distribution, brain, heart atria, and ventricle.

Its subcellular location is the cell membrane. The protein localises to the postsynaptic cell membrane. Functionally, the muscarinic acetylcholine receptor mediates various cellular responses, including inhibition of adenylate cyclase, breakdown of phosphoinositides and modulation of potassium channels through the action of G proteins. Primary transducing effect is Pi turnover. The chain is Muscarinic acetylcholine receptor M3 (CHRM3) from Gallus gallus (Chicken).